We begin with the raw amino-acid sequence, 100 residues long: Vesicle-associated membrane protein 3 (100 aa).

Residue S2 is modified to N-acetylserine. Over 2 to 77 (STGPTAATGS…KRKYWWKNCK (76 aa)) the chain is Cytoplasmic. Residues 14–74 (RLQQTQNQVD…AKLKRKYWWK (61 aa)) form the v-SNARE coiled-coil homology domain. Residues K66, K68, and K77 each participate in a glycyl lysine isopeptide (Lys-Gly) (interchain with G-Cter in ubiquitin) cross-link. A helical; Anchor for type IV membrane protein transmembrane segment spans residues 78–98 (MWAIGITVLVIFIIIIIVWVV). The Vesicular segment spans residues 99–100 (SS).

It belongs to the synaptobrevin family. In terms of assembly, interacts with POPDC1 (via the C-terminus cytoplasmic tail). Interacts with BCAP31; involved in VAMP3 export from the endoplasmic reticulum. Interacts with BAIAP3; this interaction is increased in the presence of calcium. Interacts with PICALM. Ubiquitinated by RNF167 at Lys-66, Lys-68 and Lys-77, regulating the recycling endosome pathway. In terms of processing, (Microbial infection) Targeted and hydrolyzed by C.botulinum neurotoxin type B (BoNT/B, botB) which hydrolyzes the 59-Gln-|-Phe-60 bond and probably inhibits neurotransmitter release. Post-translationally, (Microbial infection) Targeted and hydrolyzed by C.botulinum neurotoxin type D (BoNT/D, botD) which hydrolyzes the 42-Lys-|-Leu-43 bond and probably inhibits neurotransmitter release. Note that humans are not known to be infected by C.botulinum type D. (Microbial infection) Targeted and hydrolyzed by C.botulinum neurotoxin type F (BoNT/F, botF) which hydrolyzes the 41-Gln-|-Lys-42 bond and probably inhibits neurotransmitter release.

Its subcellular location is the early endosome membrane. The protein resides in the recycling endosome membrane. The protein localises to the synapse. It localises to the synaptosome. In terms of biological role, SNARE involved in vesicular transport from the late endosomes to the trans-Golgi network. The chain is Vesicle-associated membrane protein 3 (VAMP3) from Homo sapiens (Human).